Reading from the N-terminus, the 541-residue chain is Glutamyl-tRNA(Gln) amidotransferase subunit B, mitochondrial (541 aa).

It belongs to the GatB/GatE family. GatB subfamily. In terms of assembly, subunit of the heterotrimeric GatFAB amidotransferase (AdT) complex, composed of A (HER2), B (PET112) and F (YGR102C) subunits.

The protein localises to the mitochondrion. The catalysed reaction is L-glutamyl-tRNA(Gln) + L-glutamine + ATP + H2O = L-glutaminyl-tRNA(Gln) + L-glutamate + ADP + phosphate + H(+). Its function is as follows. Allows the formation of correctly charged Gln-tRNA(Gln) through the transamidation of misacylated Glu-tRNA(Gln) in the mitochondria. The reaction takes place in the presence of glutamine and ATP through an activated gamma-phospho-Glu-tRNA(Gln). The sequence is that of Glutamyl-tRNA(Gln) amidotransferase subunit B, mitochondrial from Saccharomyces cerevisiae (strain ATCC 204508 / S288c) (Baker's yeast).